The following is a 353-amino-acid chain: UPF0283 membrane protein YcjF (353 aa).

The next 3 helical transmembrane spans lie at 70–90, 100–120, and 213–233; these read MVMG…VQWT, VALG…GSVV, and ESTL…FIAW.

Belongs to the UPF0283 family.

The protein resides in the cell inner membrane. This is UPF0283 membrane protein YcjF from Escherichia fergusonii (strain ATCC 35469 / DSM 13698 / CCUG 18766 / IAM 14443 / JCM 21226 / LMG 7866 / NBRC 102419 / NCTC 12128 / CDC 0568-73).